A 60-amino-acid polypeptide reads, in one-letter code: Large ribosomal subunit protein uL30 (60 aa).

The protein belongs to the universal ribosomal protein uL30 family. Part of the 50S ribosomal subunit.

This Syntrophobacter fumaroxidans (strain DSM 10017 / MPOB) protein is Large ribosomal subunit protein uL30.